The sequence spans 725 residues: IML2-like protein SCY_3392 (725 aa).

Position 196 is a phosphothreonine (Thr-196). A phosphoserine mark is found at Ser-246, Ser-377, and Ser-380.

It belongs to the IML2 family.

It localises to the cytoplasm. The protein resides in the nucleus. Functionally, may be involved in mitochondrial DNA stability. The sequence is that of IML2-like protein SCY_3392 from Saccharomyces cerevisiae (strain YJM789) (Baker's yeast).